Here is a 156-residue protein sequence, read N- to C-terminus: Small ribosomal subunit protein uS7c (156 aa).

It belongs to the universal ribosomal protein uS7 family. Part of the 30S ribosomal subunit.

The protein resides in the plastid. Its subcellular location is the chloroplast. Its function is as follows. One of the primary rRNA binding proteins, it binds directly to 16S rRNA where it nucleates assembly of the head domain of the 30S subunit. The sequence is that of Small ribosomal subunit protein uS7c (rps7) from Mesostigma viride (Green alga).